The sequence spans 310 residues: Carbamate kinase (310 aa).

This sequence belongs to the carbamate kinase family.

It is found in the cytoplasm. The enzyme catalyses hydrogencarbonate + NH4(+) + ATP = carbamoyl phosphate + ADP + H2O + H(+). It participates in metabolic intermediate metabolism; carbamoyl phosphate degradation; CO(2) and NH(3) from carbamoyl phosphate: step 1/1. The sequence is that of Carbamate kinase (arcC) from Staphylococcus epidermidis (strain ATCC 35984 / DSM 28319 / BCRC 17069 / CCUG 31568 / BM 3577 / RP62A).